A 252-amino-acid chain; its full sequence is Neurovirulence factor ICP34.5 (252 aa).

Basic residues predominate over residues 1–15 (MARRRRRHRGPRRPR). The required for nucleolar localization stretch occupies residues 1 to 17 (MARRRRRHRGPRRPRPP). 2 disordered regions span residues 1–129 (MARR…PFRL) and 150–179 (RRAG…PATP). Residues 25 to 36 (TAQSQVTSTPNS) show a composition bias toward polar residues. Residues 46–59 (AAPPPPPAGGPPPS) show a composition bias toward pro residues. The segment covering 74–84 (ASDDDDDDDWP) has biased composition (acidic residues). Pro residues-rich tracts occupy residues 85-94 (DSPPPEPAPE) and 120-129 (SHPPSRPFRL). The Nuclear export signal motif lies at 129–138 (LPPRLALRLR). A run of 6 repeats spans residues 162-164 (ATP), 165-167 (ATP), 168-170 (ATP), 171-173 (ATP), 174-176 (ATP), and 177-179 (ATP). A 6 X 3 AA tandem repeats of A-T-P region spans residues 162–179 (ATPATPATPATPATPATP). A compositionally biased stretch (low complexity) spans 165-179 (ATPATPATPATPATP). The binding to PP1CA stretch occupies residues 179 to 192 (PARVRFSPHVRVRH). Positions 179–192 (PARVRFSPHVRVRH) are interaction with host PPP1CA. An important for interferon resistance region spans residues 194–252 (VVWASAARLARRGSWARERADRARFRRRVAEAEAVIGPCLGPKARARALARGAGPANSV). A Bipartite nuclear localization signal motif is present at residues 204–222 (RRGSWARERADRARFRRRV). Positions 222 to 237 (VAEAEAVIGPCLGPKA) are interaction with host EIF2S1/EIF-2ALPHA.

It belongs to the PPP1R15 family. As to quaternary structure, interacts with host PPP1CA to form a high-molecular-weight complex that dephosphorylates EIF2S1/eIF-2alpha. Interacts with host EIF2S1/eIF-2alpha; this interaction is crucial for the specific dephosphorylation of EIF2S1/eIF-2alpha by PPP1CA. Binds to proliferating cell nuclear antigen (PCNA), which may release host cells from growth arrest and facilitate viral replication. Interacts (via N-terminus) with host C1QBP and PRKCA. Interacts with protein UL31. Interacts with host TBK1. Interacts with host STING/TMEM173; this interaction inhibits the intracellular DNA sensing pathway. Interacts with host BECN1; this interaction modulates host autophagy.

Its subcellular location is the host cytoplasm. It is found in the host nucleus. The protein resides in the host nucleolus. The protein localises to the virion. Functionally, inhibits the establishment of the immune response and of the integrated stress response (ISR) in the infected cell. Plays essential roles in viral nuclear egress to mediate capsid transit across the nuclear membrane. Facilitates nuclear egress cooperatively with host C1QBP and protein kinase C/PKC to induce lamin A/C phosphorylation and subsequent reorganization. In turn, lamina disassembles and nuclear egress occurs. Recruits the serine/threonine protein phosphatase PPP1CA/PP1-alpha to dephosphorylate the translation initiation factor EIF2S1/eIF-2alpha, thereby couteracting the host shutoff of protein synthesis involving double-stranded RNA-dependent protein kinase EIF2AK2/PKR. In turn, controls host IRF3 activation and subsequently inhibits host interferon response. Controls the DNA sensing pathway by interacting with and inhibiting host STING/TMEM173. Also down-modulates the host MHC class II proteins cell surface expression. Acts as a neurovirulence factor that has a profound effect on the growth of the virus in central nervous system tissue, by interacting with host BECN1 and thereby antagonizing the host autophagy response. The protein is Neurovirulence factor ICP34.5 (RL1) of Human herpesvirus 1 (strain CVG-2) (HHV-1).